A 525-amino-acid polypeptide reads, in one-letter code: Peptide chain release factor 3 (525 aa).

A tr-type G domain is found at 11 to 279; it reads DKRRTFAIIS…TYLEYAPQPA (269 aa). GTP-binding positions include 20–27, 88–92, and 142–145; these read SHPDAGKT, DTPGH, and NKLD.

This sequence belongs to the TRAFAC class translation factor GTPase superfamily. Classic translation factor GTPase family. PrfC subfamily.

It is found in the cytoplasm. Functionally, increases the formation of ribosomal termination complexes and stimulates activities of RF-1 and RF-2. It binds guanine nucleotides and has strong preference for UGA stop codons. It may interact directly with the ribosome. The stimulation of RF-1 and RF-2 is significantly reduced by GTP and GDP, but not by GMP. The polypeptide is Peptide chain release factor 3 (Levilactobacillus brevis (strain ATCC 367 / BCRC 12310 / CIP 105137 / JCM 1170 / LMG 11437 / NCIMB 947 / NCTC 947) (Lactobacillus brevis)).